A 115-amino-acid polypeptide reads, in one-letter code: uncharacterized protein (115 aa).

Residues 1–115 enclose the MSP domain; it reads MGVEISLDPP…ETVIKLSAAE (115 aa).

This is an uncharacterized protein from Caenorhabditis elegans.